We begin with the raw amino-acid sequence, 892 residues long: Exo-beta-D-glucosaminidase (892 aa).

The signal sequence occupies residues Met-1 to Ala-18. A propeptide spanning residues Ala-19–Lys-28 is cleaved from the precursor. N-linked (GlcNAc...) asparagine glycosylation is found at Asn-196, Asn-336, and Asn-440. Residue Asp-464 is the Proton donor of the active site. Glu-539 functions as the Nucleophile in the catalytic mechanism. N-linked (GlcNAc...) asparagine glycosylation is found at Asn-557, Asn-578, Asn-689, and Asn-825.

The protein belongs to the glycosyl hydrolase 2 family. As to quaternary structure, monomer.

It localises to the secreted. The protein localises to the extracellular space. The enzyme catalyses Hydrolysis of chitosan or chitosan oligosaccharides to remove successive D-glucosamine residues from the non-reducing termini.. Functionally, hydrolyzes chitosan and chitooligosaccharides with retention of anomeric configuration. Has no activity against beta-D-galactoside, beta-D-glucuronide, beta-D-mannoside, chitin, glycol chitosan, cellulose, N,N'-diacetylchitibiose and pNP-GlcNAc. The chain is Exo-beta-D-glucosaminidase from Hypocrea jecorina (Trichoderma reesei).